A 339-amino-acid chain; its full sequence is MKFVDEAFVRVEAGNGGHGCLSFRREKFIPRGGPDGGDGGDGGSVYFVADKSVNTLVEFRYQRLLRAQNGQPGMGRLRSGKKGEDLIVPVPLGTTVYDKETSELIGDLIEAGDKLCVARGGRHGLGNTHFKSSTNRAPRRTISGEEGEARELKLELKLLADVGLLGLPNAGKSTFIHAVSKATPKIADYPFTTLYPHLGVVRVEEYRSFVIADIPGLIEGASEGAGLGVQFLKHLERTQLLLHIVDIAPLDGSDPVQSIQAIISELEQFSQNLSQKPRWLVFNKIDLLPPDVAQARCQEIINRLNWKGPVYKISAIKRQGTELLCYDLMSFLETNQRSI.

Residues 1–159 (MKFVDEAFVR…RELKLELKLL (159 aa)) form the Obg domain. Positions 160–333 (ADVGLLGLPN…LCYDLMSFLE (174 aa)) constitute an OBG-type G domain. GTP-binding positions include 166 to 173 (GLPNAGKS), 191 to 195 (FTTLY), 213 to 216 (DIPG), 283 to 286 (NKID), and 314 to 316 (SAI). Residues serine 173 and threonine 193 each contribute to the Mg(2+) site.

Belongs to the TRAFAC class OBG-HflX-like GTPase superfamily. OBG GTPase family. Monomer. Mg(2+) serves as cofactor.

The protein localises to the cytoplasm. Its function is as follows. An essential GTPase which binds GTP, GDP and possibly (p)ppGpp with moderate affinity, with high nucleotide exchange rates and a fairly low GTP hydrolysis rate. Plays a role in control of the cell cycle, stress response, ribosome biogenesis and in those bacteria that undergo differentiation, in morphogenesis control. The chain is GTPase Obg from Coxiella burnetii (strain RSA 331 / Henzerling II).